The chain runs to 254 residues: NFU1 iron-sulfur cluster scaffold homolog, mitochondrial (254 aa).

Residues 1–9 constitute a mitochondrion transit peptide; that stretch reads MAATARRGW. The segment at 173–241 is nifU; sequence IKELLDTRIR…IPEVEGVEQV (69 aa). [4Fe-4S] cluster contacts are provided by Cys-210 and Cys-213.

It belongs to the NifU family. As to quaternary structure, monomer and homohexamer; the apo-NFU1 is a monomer, while the holo-NFU1 is a hexamer composed of a trimer of dimer that is probably linked by some 4Fe-4S cluster. Interacts with HIRA and EPM2A/laforin. Interacts with BOLA3. Interacts with HSPA9. As to expression, ubiquitous. Expression in adult lung is weak compared to fetal lung.

The protein localises to the mitochondrion. It localises to the cytoplasm. It is found in the cytosol. Its function is as follows. Iron-sulfur cluster scaffold protein which can assemble [4Fe-4S] clusters and deliver them to target proteins. This is NFU1 iron-sulfur cluster scaffold homolog, mitochondrial (NFU1) from Homo sapiens (Human).